A 181-amino-acid polypeptide reads, in one-letter code: 3-hydroxyacyl-[acyl-carrier-protein] dehydratase FabZ (181 aa).

The active site involves H54.

Belongs to the thioester dehydratase family. FabZ subfamily.

The protein localises to the cytoplasm. The enzyme catalyses a (3R)-hydroxyacyl-[ACP] = a (2E)-enoyl-[ACP] + H2O. In terms of biological role, involved in unsaturated fatty acids biosynthesis. Catalyzes the dehydration of short chain beta-hydroxyacyl-ACPs and long chain saturated and unsaturated beta-hydroxyacyl-ACPs. In Yersinia pestis, this protein is 3-hydroxyacyl-[acyl-carrier-protein] dehydratase FabZ.